Consider the following 1039-residue polypeptide: Translation initiation factor IF-2 (1039 aa).

Disordered stretches follow at residues 39–347 (TISE…KWQE) and 400–452 (ARPP…PEKV). The span at 103–125 (RNTTSNAPEASVANNQIASSEAN) shows a compositional bias: polar residues. Residues 157–176 (PQKPAAPEAEPEAQSQAPAK) show a composition bias toward low complexity. 2 stretches are compositionally biased toward basic and acidic residues: residues 178 to 197 (AVEK…ERQP) and 226 to 243 (PILK…DQAK). The segment covering 408–423 (ARSASAATAAPISSPT) has biased composition (low complexity). Over residues 432–451 (NNRDQNRRQETEVKRERPEK) the composition is skewed to basic and acidic residues. One can recognise a tr-type G domain in the interval 533 to 706 (RRPPVVTIMG…LLVAEVGELS (174 aa)). The segment at 542–549 (GHVDHGKT) is G1. 542–549 (GHVDHGKT) is a GTP binding site. A G2 region spans residues 567 to 571 (GITQH). The tract at residues 592-595 (DTPG) is G3. Residues 592-596 (DTPGH) and 646-649 (NKID) each bind GTP. The G4 stretch occupies residues 646 to 649 (NKID). The interval 682–684 (SAI) is G5.

This sequence belongs to the TRAFAC class translation factor GTPase superfamily. Classic translation factor GTPase family. IF-2 subfamily.

Its subcellular location is the cytoplasm. Functionally, one of the essential components for the initiation of protein synthesis. Protects formylmethionyl-tRNA from spontaneous hydrolysis and promotes its binding to the 30S ribosomal subunits. Also involved in the hydrolysis of GTP during the formation of the 70S ribosomal complex. The protein is Translation initiation factor IF-2 of Nostoc sp. (strain PCC 7120 / SAG 25.82 / UTEX 2576).